The sequence spans 93 residues: Co-chaperonin GroES (93 aa).

This sequence belongs to the GroES chaperonin family. In terms of assembly, heptamer of 7 subunits arranged in a ring. Interacts with the chaperonin GroEL.

It is found in the cytoplasm. Functionally, together with the chaperonin GroEL, plays an essential role in assisting protein folding. The GroEL-GroES system forms a nano-cage that allows encapsulation of the non-native substrate proteins and provides a physical environment optimized to promote and accelerate protein folding. GroES binds to the apical surface of the GroEL ring, thereby capping the opening of the GroEL channel. The sequence is that of Co-chaperonin GroES from Streptococcus constellatus.